The following is a 275-amino-acid chain: Glucosamine-6-phosphate deaminase 2 (275 aa).

Asp-72 serves as the catalytic Proton acceptor; for enolization step. Residues 103 to 131 adopt a coiled-coil conformation; the sequence is NAHILDGNASDLQAECEDFERKIKEAGGI. The active-site For ring-opening step is Asp-141. His-143 (proton acceptor; for ring-opening step) is an active-site residue. The active-site For ring-opening step is the Glu-148.

This sequence belongs to the glucosamine/galactosamine-6-phosphate isomerase family. Homohexamer.

Its subcellular location is the cytoplasm. It carries out the reaction alpha-D-glucosamine 6-phosphate + H2O = beta-D-fructose 6-phosphate + NH4(+). Catalyzes the reversible conversion of alpha-D-glucosamine 6-phosphate (GlcN-6P) into beta-D-fructose 6-phosphate (Fru-6P) and ammonium ion, a regulatory reaction step in de novo uridine diphosphate-N-acetyl-alpha-D-glucosamine (UDP-GlcNAc) biosynthesis via hexosamine pathway. The chain is Glucosamine-6-phosphate deaminase 2 from Xenopus tropicalis (Western clawed frog).